The sequence spans 139 residues: Putative nickel-responsive regulator (139 aa).

Ni(2+) is bound by residues His-79, His-90, His-92, and Cys-98.

This sequence belongs to the transcriptional regulatory CopG/NikR family. Requires Ni(2+) as cofactor.

In terms of biological role, transcriptional regulator. This chain is Putative nickel-responsive regulator, found in Geobacter sp. (strain M21).